Reading from the N-terminus, the 210-residue chain is Ribosomal RNA large subunit methyltransferase E (210 aa).

Gly-60, Trp-62, Asp-80, Asp-96, and Asp-122 together coordinate S-adenosyl-L-methionine. The active-site Proton acceptor is the Lys-162.

Belongs to the class I-like SAM-binding methyltransferase superfamily. RNA methyltransferase RlmE family.

It localises to the cytoplasm. It carries out the reaction uridine(2552) in 23S rRNA + S-adenosyl-L-methionine = 2'-O-methyluridine(2552) in 23S rRNA + S-adenosyl-L-homocysteine + H(+). Specifically methylates the uridine in position 2552 of 23S rRNA at the 2'-O position of the ribose in the fully assembled 50S ribosomal subunit. The polypeptide is Ribosomal RNA large subunit methyltransferase E (Dichelobacter nodosus (strain VCS1703A)).